The chain runs to 765 residues: Protein transport protein Sec23A (765 aa).

Zn(2+) is bound by residues Cys61, Cys66, Cys85, and Cys88. The stretch at 632–718 (PEPVLLDSSS…EHGGSQARFL (87 aa)) is one Gelsolin-like repeat.

The protein belongs to the SEC23/SEC24 family. SEC23 subfamily. In terms of assembly, COPII is composed of at least five proteins: the Sec23/24 complex, the Sec13/31 complex and Sar1.

The protein localises to the cytoplasmic vesicle. The protein resides in the COPII-coated vesicle membrane. It localises to the endoplasmic reticulum membrane. Its subcellular location is the cytoplasm. It is found in the cytosol. In terms of biological role, component of the coat protein complex II (COPII) which promotes the formation of transport vesicles from the endoplasmic reticulum (ER). The coat has two main functions, the physical deformation of the endoplasmic reticulum membrane into vesicles and the selection of cargo molecules for their transport to the Golgi complex. The polypeptide is Protein transport protein Sec23A (Danio rerio (Zebrafish)).